The following is a 571-amino-acid chain: Urease subunit alpha (571 aa).

Residues 133–571 (AGIDTHIHFI…VALNQRYFFS (439 aa)) form the Urease domain. His-138, His-140, and Lys-221 together coordinate Ni(2+). Lys-221 carries the N6-carboxylysine modification. His-223 is a substrate binding site. Residues His-250 and His-276 each contribute to the Ni(2+) site. Catalysis depends on His-324, which acts as the Proton donor. Asp-364 is a binding site for Ni(2+).

It belongs to the metallo-dependent hydrolases superfamily. Urease alpha subunit family. As to quaternary structure, heterotrimer of UreA (gamma), UreB (beta) and UreC (alpha) subunits. Three heterotrimers associate to form the active enzyme. Requires Ni cation as cofactor. Carboxylation allows a single lysine to coordinate two nickel ions.

It is found in the cytoplasm. It catalyses the reaction urea + 2 H2O + H(+) = hydrogencarbonate + 2 NH4(+). The protein operates within nitrogen metabolism; urea degradation; CO(2) and NH(3) from urea (urease route): step 1/1. This chain is Urease subunit alpha, found in Photorhabdus laumondii subsp. laumondii (strain DSM 15139 / CIP 105565 / TT01) (Photorhabdus luminescens subsp. laumondii).